Reading from the N-terminus, the 349-residue chain is Microbial Terpene synthase-like protein 1 (349 aa).

Positions 98, 102, 243, and 247 each coordinate Mg(2+). The DDXXD motif signature appears at 98 to 102; it reads DDILD.

Belongs to the terpene synthase family. The cofactor is Mg(2+).

It functions in the pathway secondary metabolite biosynthesis; terpenoid biosynthesis. Its function is as follows. Sesquiterpene synthase converting farnesyl diphosphate to six sesquiterpenes, with beta-elemene, delta-cadinene and an unidentified oxygenated sesquiterpene as the major products. Has no diterpene synthase activity. In Selaginella moellendorffii (Spikemoss), this protein is Microbial Terpene synthase-like protein 1.